Here is a 141-residue protein sequence, read N- to C-terminus: Large ribosomal subunit protein uL11 (141 aa).

This sequence belongs to the universal ribosomal protein uL11 family. Part of the ribosomal stalk of the 50S ribosomal subunit. Interacts with L10 and the large rRNA to form the base of the stalk. L10 forms an elongated spine to which L12 dimers bind in a sequential fashion forming a multimeric L10(L12)X complex. One or more lysine residues are methylated.

Functionally, forms part of the ribosomal stalk which helps the ribosome interact with GTP-bound translation factors. The sequence is that of Large ribosomal subunit protein uL11 from Synechococcus sp. (strain WH7803).